The chain runs to 283 residues: Digeranylgeranylglyceryl phosphate synthase (283 aa).

The next 8 helical transmembrane spans lie at 5–27 (VEII…AILA), 37–57 (AMLA…YFDY), 85–105 (LLFI…DTWI), 128–148 (PLIG…FAGY), 152–172 (EGLI…MTTA), 203–223 (AIIA…LYIY), 228–248 (INYL…AVLL), and 263–283 (LKTG…TITF).

Belongs to the UbiA prenyltransferase family. DGGGP synthase subfamily. Mg(2+) is required as a cofactor.

The protein resides in the cell membrane. The enzyme catalyses sn-3-O-(geranylgeranyl)glycerol 1-phosphate + (2E,6E,10E)-geranylgeranyl diphosphate = 2,3-bis-O-(geranylgeranyl)-sn-glycerol 1-phosphate + diphosphate. It participates in membrane lipid metabolism; glycerophospholipid metabolism. In terms of biological role, prenyltransferase that catalyzes the transfer of the geranylgeranyl moiety of geranylgeranyl diphosphate (GGPP) to the C2 hydroxyl of (S)-3-O-geranylgeranylglyceryl phosphate (GGGP). This reaction is the second ether-bond-formation step in the biosynthesis of archaeal membrane lipids. The protein is Digeranylgeranylglyceryl phosphate synthase of Methanobrevibacter smithii (strain ATCC 35061 / DSM 861 / OCM 144 / PS).